The chain runs to 160 residues: Transcription elongation factor GreA (160 aa).

The stretch at M1 to R72 forms a coiled coil.

The protein belongs to the GreA/GreB family.

Its function is as follows. Necessary for efficient RNA polymerase transcription elongation past template-encoded arresting sites. The arresting sites in DNA have the property of trapping a certain fraction of elongating RNA polymerases that pass through, resulting in locked ternary complexes. Cleavage of the nascent transcript by cleavage factors such as GreA or GreB allows the resumption of elongation from the new 3'terminus. GreA releases sequences of 2 to 3 nucleotides. This is Transcription elongation factor GreA from Streptococcus pneumoniae (strain Hungary19A-6).